We begin with the raw amino-acid sequence, 108 residues long: FK506-binding protein 1A (108 aa).

A disordered region spans residues 1–20 (MGVEVQRISPGDGKNFPKPG). A PPIase FKBP-type domain is found at 20-108 (GDTVSIHYTG…TFEVELLKIN (89 aa)).

It belongs to the FKBP-type PPIase family. FKBP1 subfamily.

The protein resides in the cytoplasm. It catalyses the reaction [protein]-peptidylproline (omega=180) = [protein]-peptidylproline (omega=0). With respect to regulation, inhibited by both FK506 and rapamycin. Its function is as follows. PPIases accelerate the folding of proteins. It catalyzes the cis-trans isomerization of proline imidic peptide bonds in oligopeptides. This Emericella nidulans (strain FGSC A4 / ATCC 38163 / CBS 112.46 / NRRL 194 / M139) (Aspergillus nidulans) protein is FK506-binding protein 1A (fprA).